A 333-amino-acid chain; its full sequence is tRNA N6-adenosine threonylcarbamoyltransferase (333 aa).

The Fe cation site is built by His108 and His112. Substrate contacts are provided by residues 129-133, Asp161, Glu178, and Ser258; that span reads LVSGG. Asp286 serves as a coordination point for Fe cation.

This sequence belongs to the KAE1 / TsaD family. It depends on Fe(2+) as a cofactor.

The protein resides in the cytoplasm. The catalysed reaction is L-threonylcarbamoyladenylate + adenosine(37) in tRNA = N(6)-L-threonylcarbamoyladenosine(37) in tRNA + AMP + H(+). Functionally, required for the formation of a threonylcarbamoyl group on adenosine at position 37 (t(6)A37) in tRNAs that read codons beginning with adenine. Is probably involved in the transfer of the threonylcarbamoyl moiety of threonylcarbamoyl-AMP (TC-AMP) to the N6 group of A37. In Pyrobaculum islandicum (strain DSM 4184 / JCM 9189 / GEO3), this protein is tRNA N6-adenosine threonylcarbamoyltransferase.